Consider the following 175-residue polypeptide: uncharacterized protein (175 aa).

This is an uncharacterized protein from Acanthamoeba polyphaga (Amoeba).